Consider the following 494-residue polypeptide: Glutamyl-tRNA(Gln) amidotransferase subunit A (494 aa).

Active-site charge relay system residues include K79 and S159. Catalysis depends on S183, which acts as the Acyl-ester intermediate.

It belongs to the amidase family. GatA subfamily. As to quaternary structure, heterotrimer of A, B and C subunits.

It carries out the reaction L-glutamyl-tRNA(Gln) + L-glutamine + ATP + H2O = L-glutaminyl-tRNA(Gln) + L-glutamate + ADP + phosphate + H(+). Functionally, allows the formation of correctly charged Gln-tRNA(Gln) through the transamidation of misacylated Glu-tRNA(Gln) in organisms which lack glutaminyl-tRNA synthetase. The reaction takes place in the presence of glutamine and ATP through an activated gamma-phospho-Glu-tRNA(Gln). The polypeptide is Glutamyl-tRNA(Gln) amidotransferase subunit A (Bartonella tribocorum (strain CIP 105476 / IBS 506)).